The following is a 104-amino-acid chain: Circadian clock oscillator protein KaiB (104 aa).

Belongs to the KaiB family. As to quaternary structure, the KaiABC complex composition changes during the circadian cycle to control KaiC phosphorylation. Complexes KaiC(6), KaiA(2-4):KaiC(6), KaiB(6):KaiC(6) and KaiC(6):KaiB(6):KaiA(12) are among the most important forms, many form cooperatively. Undergoes a major conformational rearrangment; in the free state forms homotetramers as a dimer of dimers. When bound to the CI domain of KaiC switches to a monomeric thioredoxin-fold (KaiB(fs)). KaiB(fs) binds CikA, leading it to dephosphorylate phospho-RpaA.

In terms of biological role, key component of the KaiABC oscillator complex, which constitutes the main circadian regulator in cyanobacteria. Complex composition changes during the circadian cycle to control KaiC phosphorylation. KaiA stimulates KaiC autophosphorylation, while KaiB sequesters KaiA, leading to KaiC autodephosphorylation. Phospho-Ser-431 KaiC accumulation triggers binding of KaiB to form the KaiB(6):KaiC(6) complex, leading to changes in output regulators CikA and SasA. KaiB switches to a thioredoxin-like fold (KaiB(fs)) when bound to KaiC. KaiB(6):KaiC(6) formation exposes a site for KaiA binding that sequesters KaiA from KaiC, making the KaiC(6):KaiB(6):KaiA(12) complex that results in KaiC autodephosphorylation. Its function is as follows. A metamorphic protein which reversibly switches between an inactive tetrameric fold and a rare, thioredoxin-like monomeric fold (KaiB(fs)). KaiB(fs) binds phospho-KaiC, KaiA and CikA. KaiA and CikA compete for binding to KaiB(fs), and KaiB(fs) and SasA compete for binding to KaiC, thus the clock oscillator and output signal pathway are tightly coupled. The polypeptide is Circadian clock oscillator protein KaiB (Rippkaea orientalis (strain PCC 8801 / RF-1) (Cyanothece sp. (strain PCC 8801))).